The sequence spans 163 residues: MQPVLECEIFVENASGLELPELAIAPWENHLQRWLPELTAALPPADGYELTLRFTTDAEIHNLNHQYRHKDQPTDVLSFAALEDNFASPLPPGEPLYLGDIIVSVETAQRQAQERQHSLQTELGWLVSHGLLHLLGWDHPDEARLIEMLDRQAVLLRNVQLIP.

Positions 129, 133, and 139 each coordinate Zn(2+).

Belongs to the endoribonuclease YbeY family. Zn(2+) serves as cofactor.

It is found in the cytoplasm. In terms of biological role, single strand-specific metallo-endoribonuclease involved in late-stage 70S ribosome quality control and in maturation of the 3' terminus of the 16S rRNA. This Picosynechococcus sp. (strain ATCC 27264 / PCC 7002 / PR-6) (Agmenellum quadruplicatum) protein is Endoribonuclease YbeY.